The chain runs to 735 residues: Glycogen [starch] synthase, muscle (735 aa).

The residue at position 8 (S8) is a Phosphoserine; by AMPK and PKA. Residue S11 is modified to Phosphoserine. Residue K39 coordinates UDP. Residues H205 and R211 each contribute to the UDP-alpha-D-glucose site. H291, E292, Q294, H297, and K301 together coordinate alpha-D-glucose 6-phosphate. UDP is bound at residue R331. R331 is a UDP-alpha-D-glucose binding site. S412 bears the Phosphoserine mark. Residue H501 participates in alpha-D-glucose 6-phosphate binding. 3 residues coordinate UDP-alpha-D-glucose: E510, W512, and G513. Position 515 (T515) interacts with UDP. Residues R582 and R586 each contribute to the alpha-D-glucose 6-phosphate site. Residues 629-735 (DATQGYRYPR…PASSLGEERN (107 aa)) are disordered. S641 is subject to Phosphoserine; by DYRK2, GSK3-alpha, GSK3-beta and PASK. Residues S645 and S649 each carry the phosphoserine; by GSK3-alpha and GSK3-beta modification. S652 carries the phosphoserine modification. S653 is modified (phosphoserine; by GSK3-alpha and GSK3-beta). S657 carries the phosphoserine; by CK2 modification. Acidic residues predominate over residues 658-681 (EDEEEPRDGLPEEDGERYDEDEEA). The span at 682-695 (AKDRRNIRAPEWPR) shows a compositional bias: basic and acidic residues. Residue S698 is modified to Phosphoserine. Over residues 698-735 (SCTSSSGGSKRSNSVDTSSLSTPSEPLSPASSLGEERN) the composition is skewed to low complexity. Position 700 is a phosphothreonine (T700). Phosphoserine is present on residues S709 and S711. Phosphothreonine is present on T719. Phosphoserine occurs at positions 725 and 729.

This sequence belongs to the glycosyltransferase 3 family. In terms of assembly, part of the GYS1-GYG1 complex, a heterooctamer composed of a tetramer of GYS1 and 2 dimers of GYG1, where each GYS1 protomer binds to one GYG1 subunit (via GYG1 C-terminus); the GYS1 tetramer may dissociate from GYG1 dimers to continue glycogen polymerization on its own. In terms of processing, phosphorylation at Ser-8 is required for modification of Ser-11 by casein kinase I. Post-translationally, phosphorylated at Ser-641 by PASK, leading to inactivation; phosphorylation by PASK is inhibited by glycogen. Dephosphorylation at Ser-641 and Ser-645 by PP1 activates the enzyme. Phosphorylation at Ser-8 by AMPK inactivates the enzyme activity. Phosphorylated at Ser-641 by DYRK2, leading to inactivation. Primed phosphorylation at Ser-657 (site 5) by CSNK2A1 and CSNK2A2 is required for inhibitory phosphorylation at Ser-641 (site 3a), Ser-645 (site 3b), Ser-649 (site 3c) and Ser-653 (site 4) by GSK3A and GSK3B.

It carries out the reaction [(1-&gt;4)-alpha-D-glucosyl](n) + UDP-alpha-D-glucose = [(1-&gt;4)-alpha-D-glucosyl](n+1) + UDP + H(+). The protein operates within glycan biosynthesis; glycogen biosynthesis. With respect to regulation, allosteric activation by glucose-6-phosphate. Phosphorylation reduces the activity towards UDP-glucose. When in the non-phosphorylated state, glycogen synthase does not require glucose-6-phosphate as an allosteric activator; when phosphorylated it does. Functionally, glycogen synthase participates in the glycogen biosynthetic process along with glycogenin and glycogen branching enzyme. Extends the primer composed of a few glucose units formed by glycogenin by adding new glucose units to it. In this context, glycogen synthase transfers the glycosyl residue from UDP-Glc to the non-reducing end of alpha-1,4-glucan. The chain is Glycogen [starch] synthase, muscle from Oryctolagus cuniculus (Rabbit).